A 511-amino-acid chain; its full sequence is 2,3-bisphosphoglycerate-independent phosphoglycerate mutase (511 aa).

Asp-12 contributes to the Mn(2+) binding site. Residue Tyr-36 is modified to Phosphotyrosine. Ser-62 is a binding site for Mn(2+). Ser-62 (phosphoserine intermediate) is an active-site residue. Substrate contacts are provided by residues His-123, 153–154, Arg-185, Arg-191, 261–264, and Lys-336; these read RD and RPDR. The Mn(2+) site is built by Asp-403, His-407, Asp-444, His-445, and His-462.

It belongs to the BPG-independent phosphoglycerate mutase family. In terms of assembly, monomer. The cofactor is Mn(2+).

The enzyme catalyses (2R)-2-phosphoglycerate = (2R)-3-phosphoglycerate. Its pathway is carbohydrate degradation; glycolysis; pyruvate from D-glyceraldehyde 3-phosphate: step 3/5. Its activity is regulated as follows. Could be inhibited during sporulation by acidification of the forespore, thus allowing accumulation of the spore's large depot of 3-phosphoglyceric acid. Its function is as follows. Essential for rapid growth and for sporulation. Catalyzes the interconversion of 2-phosphoglycerate (2-PGA) and 3-phosphoglycerate (3-PGA). The protein is 2,3-bisphosphoglycerate-independent phosphoglycerate mutase of Geobacillus stearothermophilus (Bacillus stearothermophilus).